A 195-amino-acid polypeptide reads, in one-letter code: MTPQLILASTSVFRQALLQKLGLAFGSCNPDIDESPMTNESAQDLVLRLAKAKTKAGATHFPHGLIIGSDQVAVIDGKIIGKPLNRENAIKQLSQASGKVITFYTGLALYHAETGEMNAQVEPFTVHFRQLSAAQIAAYVDKEQPFYCAGSFKSEGLGIALFNRLEGRDPNTLIGLPLILLTEMLLNQGIDVLAD.

Catalysis depends on aspartate 70, which acts as the Proton acceptor.

It belongs to the Maf family. YceF subfamily. The cofactor is a divalent metal cation.

It localises to the cytoplasm. It catalyses the reaction N(7)-methyl-GTP + H2O = N(7)-methyl-GMP + diphosphate + H(+). Nucleoside triphosphate pyrophosphatase that hydrolyzes 7-methyl-GTP (m(7)GTP). May have a dual role in cell division arrest and in preventing the incorporation of modified nucleotides into cellular nucleic acids. This is 7-methyl-GTP pyrophosphatase from Shewanella sp. (strain MR-7).